The sequence spans 1390 residues: Nuclear pore complex protein Nup155 (1390 aa).

An O-linked (GlcNAc) serine glycan is attached at Ser525. Positions 598-632 (GSPMYSSSPVPTGSPYPNPSSLGTPSHGAQPPTMS) are disordered. Residue Lys739 forms a Glycyl lysine isopeptide (Lys-Gly) (interchain with G-Cter in SUMO2) linkage. Positions 984–1011 (QSKAAPQSPSVPKKPGPPVLSSDPNMLS) are disordered. Ser1056 carries the post-translational modification Phosphoserine.

This sequence belongs to the non-repetitive/WGA-negative nucleoporin family. In terms of assembly, interacts with GLE1. Able to form a heterotrimer with GLE1 and NUP42 in vitro. Forms a complex with NUP35, NUP93, NUP205 and lamin B. Phosphorylated. Phosphorylation and dephosphorylation may be important for the function of NUP155 and may play a role in the reversible disassembly of the nuclear pore complex during mitosis. Post-translationally, disulfide-linked to NUP62. The inner channel of the NPC has a different redox environment from the cytoplasm and allows the formation of interchain disulfide bonds between some nucleoporins, the significant increase of these linkages upon oxidative stress reduces the permeability of the NPC.

The protein resides in the nucleus. Its subcellular location is the nuclear pore complex. It is found in the nucleus membrane. Its function is as follows. Essential component of nuclear pore complex. Could be essessential for embryogenesis. Nucleoporins may be involved both in binding and translocating proteins during nucleocytoplasmic transport. The chain is Nuclear pore complex protein Nup155 (Nup155) from Rattus norvegicus (Rat).